A 63-amino-acid polypeptide reads, in one-letter code: Large ribosomal subunit protein uL29 (63 aa).

It belongs to the universal ribosomal protein uL29 family.

This chain is Large ribosomal subunit protein uL29, found in Haemophilus ducreyi (strain 35000HP / ATCC 700724).